Here is a 309-residue protein sequence, read N- to C-terminus: DNA-directed RNA polymerase subunit alpha (309 aa).

The segment at 1–225 (MFQVQCLESA…SLFKLVNSAD (225 aa)) is alpha N-terminal domain (alpha-NTD). Residues 237-309 (IVQVSQTDVT…LHERFNLTLN (73 aa)) form an alpha C-terminal domain (alpha-CTD) region.

The protein belongs to the RNA polymerase alpha chain family. In plastids the minimal PEP RNA polymerase catalytic core is composed of four subunits: alpha, beta, beta', and beta''. When a (nuclear-encoded) sigma factor is associated with the core the holoenzyme is formed, which can initiate transcription.

It is found in the plastid. It localises to the chloroplast. It catalyses the reaction RNA(n) + a ribonucleoside 5'-triphosphate = RNA(n+1) + diphosphate. Functionally, DNA-dependent RNA polymerase catalyzes the transcription of DNA into RNA using the four ribonucleoside triphosphates as substrates. In Emiliania huxleyi (Coccolithophore), this protein is DNA-directed RNA polymerase subunit alpha.